The following is a 405-amino-acid chain: NADH-quinone oxidoreductase subunit D (405 aa).

It belongs to the complex I 49 kDa subunit family. In terms of assembly, NDH-1 is composed of 14 different subunits. Subunits NuoB, C, D, E, F, and G constitute the peripheral sector of the complex.

The protein resides in the cell inner membrane. It catalyses the reaction a quinone + NADH + 5 H(+)(in) = a quinol + NAD(+) + 4 H(+)(out). Functionally, NDH-1 shuttles electrons from NADH, via FMN and iron-sulfur (Fe-S) centers, to quinones in the respiratory chain. The immediate electron acceptor for the enzyme in this species is believed to be ubiquinone. Couples the redox reaction to proton translocation (for every two electrons transferred, four hydrogen ions are translocated across the cytoplasmic membrane), and thus conserves the redox energy in a proton gradient. This chain is NADH-quinone oxidoreductase subunit D, found in Afipia carboxidovorans (strain ATCC 49405 / DSM 1227 / KCTC 32145 / OM5) (Oligotropha carboxidovorans).